Here is a 338-residue protein sequence, read N- to C-terminus: Methionine synthase (338 aa).

Residues His-210, Cys-212, Glu-234, and Cys-294 each contribute to the Zn(2+) site.

Belongs to the archaeal MetE family. Zn(2+) serves as cofactor.

It participates in amino-acid biosynthesis; L-methionine biosynthesis via de novo pathway. Functionally, catalyzes the transfer of a methyl group to L-homocysteine resulting in methionine formation. The physiological methyl donor is unknown. This Pyrococcus abyssi (strain GE5 / Orsay) protein is Methionine synthase.